Reading from the N-terminus, the 298-residue chain is Glutamyl-Q tRNA(Asp) synthetase (298 aa).

L-glutamate-binding positions include 12 to 16 and Glu-48; that span reads RFAPT. A 'HIGH' region motif is present at residues 15 to 25; that stretch reads PTPSGYLHFGS. Zn(2+)-binding residues include Cys-104, Cys-106, Tyr-118, and Cys-122. 2 residues coordinate L-glutamate: Tyr-175 and Arg-193. Positions 231 to 235 match the 'KMSKS' region motif; it reads KLGKS. Lys-234 contributes to the ATP binding site.

It belongs to the class-I aminoacyl-tRNA synthetase family. GluQ subfamily. It depends on Zn(2+) as a cofactor.

Functionally, catalyzes the tRNA-independent activation of glutamate in presence of ATP and the subsequent transfer of glutamate onto a tRNA(Asp). Glutamate is transferred on the 2-amino-5-(4,5-dihydroxy-2-cyclopenten-1-yl) moiety of the queuosine in the wobble position of the QUC anticodon. The sequence is that of Glutamyl-Q tRNA(Asp) synthetase from Pseudomonas fluorescens (strain ATCC BAA-477 / NRRL B-23932 / Pf-5).